We begin with the raw amino-acid sequence, 410 residues long: Tegument protein VP16 homolog (410 aa).

The interval 388 to 410 (PPSPSEILPGDPPRPPTCGFLTR) is disordered.

It belongs to the herpesviridae tegument protein VP16 protein family. As to quaternary structure, associates with the VP16-induced complex; binding to host HCFC1 activates VP16 for association with the octamer motif-binding host protein POU2F1, to form a multiprotein-DNA complex responsible for activating transcription of the viral immediate early genes.

The protein localises to the virion tegument. Its subcellular location is the host nucleus. In terms of biological role, transcriptional activator of immediate-early (IE) gene products (alpha genes). Acts as a key activator of lytic infection by initiating the lytic program through the assembly of the transcriptional regulatory VP16-induced complex composed of VP16 and two cellular factors, HCFC1 and POU2F 1. VP16-induced complex represents a regulatory switch: when it is on, it promotes IE-gene expression and thus lytic infection, and when it is off, it limits IE-gene transcription favoring latent infection. Functionally, may play a role in the aggregation of tegument proteins around nucleocapsids during virus morphogenesis. The polypeptide is Tegument protein VP16 homolog (Varicella-zoster virus (strain Oka vaccine) (HHV-3)).